A 176-amino-acid chain; its full sequence is Disulfide bond formation protein B (176 aa).

Residues 1–14 (MLRFLNRCSRGRGA) lie on the Cytoplasmic side of the membrane. Residues 15–31 (WLLLAFTALALELTALY) traverse the membrane as a helical segment. Topologically, residues 32–49 (FQHVMLLKPCVLCIYQRS) are periplasmic. Cysteine 41 and cysteine 44 are oxidised to a cystine. The chain crosses the membrane as a helical span at residues 50-65 (ALWGVFAAGIVGAIAP). Residues 66–71 (SSLLRY) are Cytoplasmic-facing. A helical transmembrane segment spans residues 72–89 (PAIALWIYSSYEGIRLAW). Residues 90–144 (KHTDILLNPSPFTTCDFFVSFPSWLPLDKWLPAIFNATGDCSERQWSFLSMEMPQ) lie on the Periplasmic side of the membrane. Cysteines 104 and 130 form a disulfide. Residues 145–163 (WLLGIFAAYLLIAVLVLIA) traverse the membrane as a helical segment. The Cytoplasmic segment spans residues 164–176 (QPFRSKRRDLFSR).

It belongs to the DsbB family.

The protein localises to the cell inner membrane. Functionally, required for disulfide bond formation in some periplasmic proteins. Acts by oxidizing the DsbA protein. This Pectobacterium atrosepticum (strain SCRI 1043 / ATCC BAA-672) (Erwinia carotovora subsp. atroseptica) protein is Disulfide bond formation protein B.